Here is a 180-residue protein sequence, read N- to C-terminus: Crossover junction endodeoxyribonuclease RuvC (180 aa).

Catalysis depends on residues D9, E74, and D146. 3 residues coordinate Mg(2+): D9, E74, and D146.

It belongs to the RuvC family. Homodimer which binds Holliday junction (HJ) DNA. The HJ becomes 2-fold symmetrical on binding to RuvC with unstacked arms; it has a different conformation from HJ DNA in complex with RuvA. In the full resolvosome a probable DNA-RuvA(4)-RuvB(12)-RuvC(2) complex forms which resolves the HJ. Requires Mg(2+) as cofactor.

It localises to the cytoplasm. The catalysed reaction is Endonucleolytic cleavage at a junction such as a reciprocal single-stranded crossover between two homologous DNA duplexes (Holliday junction).. The RuvA-RuvB-RuvC complex processes Holliday junction (HJ) DNA during genetic recombination and DNA repair. Endonuclease that resolves HJ intermediates. Cleaves cruciform DNA by making single-stranded nicks across the HJ at symmetrical positions within the homologous arms, yielding a 5'-phosphate and a 3'-hydroxyl group; requires a central core of homology in the junction. The consensus cleavage sequence is 5'-(A/T)TT(C/G)-3'. Cleavage occurs on the 3'-side of the TT dinucleotide at the point of strand exchange. HJ branch migration catalyzed by RuvA-RuvB allows RuvC to scan DNA until it finds its consensus sequence, where it cleaves and resolves the cruciform DNA. This Methylobacillus flagellatus (strain ATCC 51484 / DSM 6875 / VKM B-1610 / KT) protein is Crossover junction endodeoxyribonuclease RuvC.